The primary structure comprises 599 residues: MKHIRNFSIIAHIDHGKSTLSDRIIQICGGLSEREMAAQVLDSMDLERERGITIKAQSVTLDYHAKDGQTYQLNFIDTPGHVDFSYEVSRSLAACEGALLVVDAGQGVEAQTLANCYTAMEMNLEVVPVLNKIDLPAADPERVAEEIEDIVGIDATDAVRCSAKTGVGVPDILERLVRDIPPPQGDPDGPLQALIIDSWFDNYLGVVSLIRIKNGSLRKGDKVKVMSTGQSYNADRLGIFTPKRVDRDVLSCGEVGWLVCAIKDILGAPVGDTLTLARNPAEKSLPGFKKVKPQVYAGLFPISSDDYEAFRDALGKLSLNDASLFYEPESSTALGFGFRCGFLGLLHMEIIQERLEREYDLELITTAPTVVYEVITTAQETVYVDSPSKLPALNNIEELREPIAECHMLLPQEYLGNVITLCIEKRGMQTNMVYHGNQVALTYEIPMAEVVLDFFDRLKSTSRGYASLDYNFKRFQTSDMVRVDVLINNERVDALALITHRDNAQYRGRDLVEKMKELIPRQQFDIAIQAAIGNHIIARSTVKQLRKNVLAKCYGGDVSRKKKLLQKQKDGKKRMKQVGNVELPQEAFLAILHVGKDSK.

Residues 2–184 (KHIRNFSIIA…RLVRDIPPPQ (183 aa)) enclose the tr-type G domain. GTP-binding positions include 14 to 19 (DHGKST) and 131 to 134 (NKID).

This sequence belongs to the TRAFAC class translation factor GTPase superfamily. Classic translation factor GTPase family. LepA subfamily.

It is found in the cell inner membrane. The catalysed reaction is GTP + H2O = GDP + phosphate + H(+). Its function is as follows. Required for accurate and efficient protein synthesis under certain stress conditions. May act as a fidelity factor of the translation reaction, by catalyzing a one-codon backward translocation of tRNAs on improperly translocated ribosomes. Back-translocation proceeds from a post-translocation (POST) complex to a pre-translocation (PRE) complex, thus giving elongation factor G a second chance to translocate the tRNAs correctly. Binds to ribosomes in a GTP-dependent manner. This is Elongation factor 4 from Yersinia enterocolitica serotype O:8 / biotype 1B (strain NCTC 13174 / 8081).